The chain runs to 175 residues: CDP-archaeol synthase (175 aa).

Helical transmembrane passes span 41–61 (GLFS…WLSF), 82–102 (LIVV…KSFF), 122–142 (FVVG…VSNF), and 150–170 (VIII…FIGV).

It belongs to the CDP-archaeol synthase family. Mg(2+) is required as a cofactor.

The protein localises to the cell membrane. It carries out the reaction 2,3-bis-O-(geranylgeranyl)-sn-glycerol 1-phosphate + CTP + H(+) = CDP-2,3-bis-O-(geranylgeranyl)-sn-glycerol + diphosphate. It functions in the pathway membrane lipid metabolism; glycerophospholipid metabolism. Its function is as follows. Catalyzes the formation of CDP-2,3-bis-(O-geranylgeranyl)-sn-glycerol (CDP-archaeol) from 2,3-bis-(O-geranylgeranyl)-sn-glycerol 1-phosphate (DGGGP) and CTP. This reaction is the third ether-bond-formation step in the biosynthesis of archaeal membrane lipids. This Methanosarcina mazei (strain ATCC BAA-159 / DSM 3647 / Goe1 / Go1 / JCM 11833 / OCM 88) (Methanosarcina frisia) protein is CDP-archaeol synthase.